The chain runs to 105 residues: Nucleoid-associated protein RPE_4812 (105 aa).

This sequence belongs to the YbaB/EbfC family. Homodimer.

The protein localises to the cytoplasm. It localises to the nucleoid. Functionally, binds to DNA and alters its conformation. May be involved in regulation of gene expression, nucleoid organization and DNA protection. This Rhodopseudomonas palustris (strain BisA53) protein is Nucleoid-associated protein RPE_4812.